An 88-amino-acid chain; its full sequence is Small ribosomal subunit protein bS18B (88 aa).

This sequence belongs to the bacterial ribosomal protein bS18 family. In terms of assembly, part of the 30S ribosomal subunit. Forms a tight heterodimer with protein bS6.

Its function is as follows. Binds as a heterodimer with protein bS6 to the central domain of the 16S rRNA, where it helps stabilize the platform of the 30S subunit. This chain is Small ribosomal subunit protein bS18B, found in Roseiflexus castenholzii (strain DSM 13941 / HLO8).